We begin with the raw amino-acid sequence, 270 residues long: Regulatory protein RecX (270 aa).

Belongs to the RecX family.

It localises to the cytoplasm. Modulates RecA activity. The chain is Regulatory protein RecX from Bacillus anthracis (strain A0248).